We begin with the raw amino-acid sequence, 369 residues long: tRNA/tmRNA (uracil-C(5))-methyltransferase (369 aa).

Residues Gln-192, Tyr-221, Asn-226, Glu-242, and Asp-302 each coordinate S-adenosyl-L-methionine. Catalysis depends on Cys-327, which acts as the Nucleophile. The Proton acceptor role is filled by Glu-361.

Belongs to the class I-like SAM-binding methyltransferase superfamily. RNA M5U methyltransferase family. TrmA subfamily.

The catalysed reaction is uridine(54) in tRNA + S-adenosyl-L-methionine = 5-methyluridine(54) in tRNA + S-adenosyl-L-homocysteine + H(+). The enzyme catalyses uridine(341) in tmRNA + S-adenosyl-L-methionine = 5-methyluridine(341) in tmRNA + S-adenosyl-L-homocysteine + H(+). Functionally, dual-specificity methyltransferase that catalyzes the formation of 5-methyluridine at position 54 (m5U54) in all tRNAs, and that of position 341 (m5U341) in tmRNA (transfer-mRNA). The sequence is that of tRNA/tmRNA (uracil-C(5))-methyltransferase from Haemophilus ducreyi (strain 35000HP / ATCC 700724).